We begin with the raw amino-acid sequence, 447 residues long: Cobyrinate a,c-diamide synthase (447 aa).

Residues 252–439 form the GATase cobBQ-type domain; it reads KIAVAFDESF…AHQHCIGNPY (188 aa). Cys-331 acts as the Nucleophile in catalysis.

The protein belongs to the CobB/CbiA family. It depends on Mg(2+) as a cofactor.

It carries out the reaction cob(II)yrinate + 2 L-glutamine + 2 ATP + 2 H2O = cob(II)yrinate a,c diamide + 2 L-glutamate + 2 ADP + 2 phosphate + 2 H(+). The enzyme catalyses Ni-sirohydrochlorin + 2 L-glutamine + 2 ATP + 2 H2O = Ni-sirohydrochlorin a,c-diamide + 2 L-glutamate + 2 ADP + 2 phosphate + 2 H(+). Its pathway is cofactor biosynthesis; adenosylcobalamin biosynthesis; cob(II)yrinate a,c-diamide from sirohydrochlorin (anaerobic route): step 10/10. Its function is as follows. Catalyzes the ATP-dependent amidation of the two carboxylate groups at positions a and c of cobyrinate, using either L-glutamine or ammonia as the nitrogen source. Involved in the biosynthesis of the unique nickel-containing tetrapyrrole coenzyme F430, the prosthetic group of methyl-coenzyme M reductase (MCR), which plays a key role in methanogenesis and anaerobic methane oxidation. Catalyzes the ATP-dependent amidation of the two carboxylate groups at positions a and c of Ni-sirohydrochlorin, using L-glutamine or ammonia as the nitrogen source. In Methanococcus maripaludis (strain C7 / ATCC BAA-1331), this protein is Cobyrinate a,c-diamide synthase.